We begin with the raw amino-acid sequence, 1028 residues long: Beta-galactosidase (1028 aa).

Substrate contacts are provided by asparagine 104 and aspartate 203. Position 203 (aspartate 203) interacts with Na(+). Mg(2+)-binding residues include glutamate 418, histidine 420, and glutamate 463. Substrate-binding positions include glutamate 463 and 539–542; that span reads EYAH. Catalysis depends on glutamate 463, which acts as the Proton donor. The active-site Nucleophile is glutamate 539. Mg(2+) is bound at residue asparagine 599. 2 residues coordinate Na(+): phenylalanine 603 and asparagine 606. The substrate site is built by asparagine 606 and tryptophan 1004.

This sequence belongs to the glycosyl hydrolase 2 family. In terms of assembly, homodimer. Mg(2+) serves as cofactor. The cofactor is Mn(2+). Fe cation is required as a cofactor. It depends on Na(+) as a cofactor. Requires K(+) as cofactor.

The catalysed reaction is Hydrolysis of terminal non-reducing beta-D-galactose residues in beta-D-galactosides.. Its activity is regulated as follows. Completely inhibited by Hg(2+), Cu(2+) Ag(2+), and partially inhibited by Zn(2+), imidazole and EDTA. Activated by Ca(2+), Co(2+), Ni(2+). Its function is as follows. This beta-galactosidase is also able to catalyze glycosyl transfer to a series of acceptors, including hexose, pentose, beta- or alpha-disaccharides, hexahydroxy alcohol, cyclitol, and aromatic glycosides, resulting in the production of galacto-oligosaccharides (GOS). The sequence is that of Beta-galactosidase (lacZ) from Enterobacter agglomerans (Erwinia herbicola).